Reading from the N-terminus, the 776-residue chain is MNVTVDQSTLAGATRGIVRGGETLKEHRDRLMAATKATGRYAGLKTLELREREPILYNKLFSRLRAGVVDARETAKKIAASPIVEQEGELCFTLYNAAGDSLLTSTGIIIHVGTMGAAIKYMIENNWEANPGVHDKDIFCNNDSLIGNVHPCDIHTIVPIFWEGELIGWVGGVTHVIDTGAVGPGSMATGQVQRFGDGYSITCRKVGANDTLFRDWLHESQRMVRTTRYWMLDERTRIAGCHMIRKLVEEVVAEEGIEAYWKFAYEAVEHGRLGLQARIKAMTIPGTYRQVGFVDVPYAHEDVRVPSDFAKLDTIMHAPCEMTIRRDGTWRLDFEGSSRWGWHTYNAHQVSFTSGIWVMMTQTLIPSEMINDGAAYGTEFRLPKGTWMNPDDRRVAFSYSWHFLVSAWTALWRGLSRSYFGRGYLEEVNAGNANTSNWLQGGGFNQYDEIHAVNSFECAANGTGATAVQDGLSHAAAIWNPEGDMGDMEIWELAEPLVYLGRQIKASSGGSGKYRGGCGFESLRMVWNAKDWTMFFMGNGHISSDWGLMGGYPAASGYRFAAHKTNLKELIASGAEIPLGGDTDPENPTWDAMLPDAQIKRDKQAITTEEMFSDYDLYLNYMRGGPGFGDPLDREPQAVADDINGGYVLERFAGEVYGVVVRKGADGQYGVDEAGTAAARAQIRKDRLAKSVPVSEWMKGEREKILAKDAGTQVRQMFAASFKLGPRFEKDFRTFWSLPDSWTLPEEEIGVPTYGSRYSMDISELPDVHTVQFVEE.

As to quaternary structure, heterohexamer of two alpha, two beta and two gamma subunits. Fe cation is required as a cofactor. It depends on Mg(2+) as a cofactor. The cofactor is Zn(2+). Post-translationally, the N-terminus is blocked.

It carries out the reaction acetone + hydrogencarbonate + 2 ATP + 3 H2O = acetoacetate + 2 AMP + 4 phosphate + 4 H(+). Its function is as follows. Catalyzes the carboxylation of acetone to form acetoacetate. Has a reduced activity on butanone, and no activity on 2-pentatone, 3-pentatone, 2-hexanone, chloroacetone, pyruvate, phosphoenolpyruvate, acetaldehyde, propionaldehyde and propylene oxide. This is Acetone carboxylase alpha subunit from Xanthobacter autotrophicus (strain ATCC BAA-1158 / Py2).